The sequence spans 306 residues: Dermonecrotic toxin LiSicTox-alphaIA1bi (306 aa).

Positions 1–18 are cleaved as a signal peptide; sequence MLPYIVLVLGCWSVLSQA. Residues 19–26 constitute a propeptide that is removed on maturation; it reads AQTDDEER. Residue His-38 is part of the active site. 2 residues coordinate Mg(2+): Glu-58 and Asp-60. Catalysis depends on His-74, which acts as the Nucleophile. 2 disulfide bridges follow: Cys-78/Cys-84 and Cys-80/Cys-223. Asp-118 serves as a coordination point for Mg(2+).

This sequence belongs to the arthropod phospholipase D family. Class II subfamily. Class IIa sub-subfamily. Mg(2+) serves as cofactor. As to expression, expressed by the venom gland.

The protein resides in the secreted. It carries out the reaction an N-(acyl)-sphingosylphosphocholine = an N-(acyl)-sphingosyl-1,3-cyclic phosphate + choline. It catalyses the reaction an N-(acyl)-sphingosylphosphoethanolamine = an N-(acyl)-sphingosyl-1,3-cyclic phosphate + ethanolamine. The enzyme catalyses a 1-acyl-sn-glycero-3-phosphocholine = a 1-acyl-sn-glycero-2,3-cyclic phosphate + choline. The catalysed reaction is a 1-acyl-sn-glycero-3-phosphoethanolamine = a 1-acyl-sn-glycero-2,3-cyclic phosphate + ethanolamine. Functionally, dermonecrotic toxins cleave the phosphodiester linkage between the phosphate and headgroup of certain phospholipids (sphingolipid and lysolipid substrates), forming an alcohol (often choline) and a cyclic phosphate. This toxin acts on sphingomyelin (SM). The level of enzymatic activity is high according to Tambourgi and colleagues or low according to Felicori and colleagues. It may also act on ceramide phosphoethanolamine (CPE), lysophosphatidylcholine (LPC) and lysophosphatidylethanolamine (LPE), but not on lysophosphatidylserine (LPS), and lysophosphatidylglycerol (LPG). It acts by transphosphatidylation, releasing exclusively cyclic phosphate products as second products. It induces complement-dependent hemolysis, dermonecrosis, vascular permeability and platelet aggregation. Both C5a and the membrane attack complex may play a role in the induction of dermonecrosis. MMP-9 and MMP-2 produced by skin fibroblasts can also contribute to proteolytic tissue destruction. This chain is Dermonecrotic toxin LiSicTox-alphaIA1bi, found in Loxosceles intermedia (Brown spider).